The following is a 147-amino-acid chain: UPF0306 protein YhbP (147 aa).

The protein belongs to the UPF0306 family.

In Shigella dysenteriae serotype 1 (strain Sd197), this protein is UPF0306 protein YhbP.